Consider the following 530-residue polypeptide: Phosphoenolpyruvate carboxykinase (ATP) 2 (530 aa).

Residues R54, Y191, and K197 each contribute to the substrate site. ATP contacts are provided by residues K197, H216, and 232 to 240; that span reads GLSGTGKTT. Residues K197 and H216 each contribute to the Mn(2+) site. D253 is a Mn(2+) binding site. Residues E281, R318, 437 to 438, and T443 contribute to the ATP site; that span reads RV. Position 318 (R318) interacts with substrate.

This sequence belongs to the phosphoenolpyruvate carboxykinase (ATP) family. The cofactor is Mn(2+).

It is found in the cytoplasm. It carries out the reaction oxaloacetate + ATP = phosphoenolpyruvate + ADP + CO2. Its pathway is carbohydrate biosynthesis; gluconeogenesis. Functionally, involved in the gluconeogenesis. Catalyzes the conversion of oxaloacetate (OAA) to phosphoenolpyruvate (PEP) through direct phosphoryl transfer between the nucleoside triphosphate and OAA. This chain is Phosphoenolpyruvate carboxykinase (ATP) 2, found in Salinibacter ruber (strain DSM 13855 / M31).